Consider the following 200-residue polypeptide: Outer-membrane lipoprotein LolB (200 aa).

Positions 1–18 are cleaved as a signal peptide; the sequence is MRRGRLLIAGLAALVLSA. Cysteine 19 carries the N-palmitoyl cysteine lipid modification. A lipid anchor (S-diacylglycerol cysteine) is attached at cysteine 19.

The protein belongs to the LolB family. Monomer.

The protein localises to the cell outer membrane. In terms of biological role, plays a critical role in the incorporation of lipoproteins in the outer membrane after they are released by the LolA protein. This Alkalilimnicola ehrlichii (strain ATCC BAA-1101 / DSM 17681 / MLHE-1) protein is Outer-membrane lipoprotein LolB.